We begin with the raw amino-acid sequence, 422 residues long: Adenylosuccinate synthetase (422 aa).

GTP is bound by residues 11–17 and 39–41; these read GDEGKGK and GHT. Aspartate 12 serves as the catalytic Proton acceptor. Mg(2+) contacts are provided by aspartate 12 and glycine 39. IMP is bound by residues 12-15, 37-40, threonine 129, arginine 143, asparagine 219, threonine 234, and arginine 298; these read DEGK and NAGH. The Proton donor role is filled by histidine 40. Residue 294-300 coordinates substrate; it reads VTTGRKR. GTP-binding positions include arginine 300, 326 to 328, and 411 to 413; these read KLD and GTG.

This sequence belongs to the adenylosuccinate synthetase family. In terms of assembly, homodimer. It depends on Mg(2+) as a cofactor.

It localises to the cytoplasm. The enzyme catalyses IMP + L-aspartate + GTP = N(6)-(1,2-dicarboxyethyl)-AMP + GDP + phosphate + 2 H(+). The protein operates within purine metabolism; AMP biosynthesis via de novo pathway; AMP from IMP: step 1/2. Its function is as follows. Plays an important role in the de novo pathway and in the salvage pathway of purine nucleotide biosynthesis. Catalyzes the first committed step in the biosynthesis of AMP from IMP. This Talaromyces marneffei (strain ATCC 18224 / CBS 334.59 / QM 7333) (Penicillium marneffei) protein is Adenylosuccinate synthetase.